A 195-amino-acid chain; its full sequence is Imidazoleglycerol-phosphate dehydratase (195 aa).

This sequence belongs to the imidazoleglycerol-phosphate dehydratase family.

The protein resides in the cytoplasm. The enzyme catalyses D-erythro-1-(imidazol-4-yl)glycerol 3-phosphate = 3-(imidazol-4-yl)-2-oxopropyl phosphate + H2O. The protein operates within amino-acid biosynthesis; L-histidine biosynthesis; L-histidine from 5-phospho-alpha-D-ribose 1-diphosphate: step 6/9. This Bacillus cytotoxicus (strain DSM 22905 / CIP 110041 / 391-98 / NVH 391-98) protein is Imidazoleglycerol-phosphate dehydratase.